The primary structure comprises 349 residues: MTRAERKRQHINHALSIGQKRETGLDDITFVHVSLPDLALEQVDISTKIGELSSSSPIFINAMTGGGGKLTYEINKSLARAASQAGIPLAVGSQMSALKDPSERLSYEIVRKENPNGLIFANLGSEATAAQAKEAVEMIGANALQIHLNVIQEIVMPEGDRSFSGALKRIEQICSRVSVPVIVKEVGFGMSKASAGKLYEAGAAAVDIGGYGGTNFSKIENLRRQRQISFFNSWGISTAASLAEIRSEFPASTMIASGGLQDALDVAKAIALGASCTGMAGHFLKALTDSGEEGLLEEIQLILEELKLIMTVLGARTIADLQKAPLVIKGETHHWLTERGVNTSSYSVR.

6–7 (RK) contributes to the substrate binding site. FMN contacts are provided by residues 62–64 (AMT), Ser93, and Asn122. A substrate-binding site is contributed by Gln152. A Mg(2+)-binding site is contributed by Glu153. FMN is bound by residues Lys184, Thr214, 258–259 (GG), and 280–281 (AG).

Belongs to the IPP isomerase type 2 family. In terms of assembly, homooctamer. Dimer of tetramers. FMN serves as cofactor. The cofactor is NADPH. Requires Mg(2+) as cofactor.

The protein resides in the cytoplasm. The catalysed reaction is isopentenyl diphosphate = dimethylallyl diphosphate. In terms of biological role, involved in the biosynthesis of isoprenoids. Catalyzes the 1,3-allylic rearrangement of the homoallylic substrate isopentenyl (IPP) to its allylic isomer, dimethylallyl diphosphate (DMAPP). This chain is Isopentenyl-diphosphate delta-isomerase, found in Bacillus subtilis (strain 168).